The chain runs to 271 residues: Phosphonoacetaldehyde hydrolase (271 aa).

Residue Asp12 is the Nucleophile of the active site. Mg(2+)-binding residues include Asp12 and Ala14. Lys54 serves as the catalytic Schiff-base intermediate with substrate. Asp188 serves as a coordination point for Mg(2+).

It belongs to the HAD-like hydrolase superfamily. PhnX family. In terms of assembly, homodimer. Mg(2+) serves as cofactor.

It catalyses the reaction phosphonoacetaldehyde + H2O = acetaldehyde + phosphate + H(+). Its function is as follows. Involved in phosphonate degradation. The sequence is that of Phosphonoacetaldehyde hydrolase from Vibrio vulnificus (strain CMCP6).